Reading from the N-terminus, the 367-residue chain is Pre-small/secreted glycoprotein (367 aa).

The first 33 residues, 1-33 (MGSGYQLLQLPRERFRKTSFLVWVIILFQRAIS), serve as a signal peptide directing secretion. Asn41 carries N-linked (GlcNAc...) asparagine; by host glycosylation. Cystine bridges form between Cys109–Cys136 and Cys122–Cys148. Asn205, Asn239, Asn258, and Asn269 each carry an N-linked (GlcNAc...) asparagine; by host glycan.

Belongs to the filoviruses glycoprotein family. In terms of assembly, homodimer; disulfide-linked. The homodimers are linked by two disulfide bonds in a parallel orientation. As to quaternary structure, monomer. This precursor is processed into mature sGP and delta-peptide by host furin or furin-like proteases. The cleavage site corresponds to the furin optimal cleavage sequence [KR]-X-[KR]-R. In terms of processing, N-glycosylated. Post-translationally, O-glycosylated.

The protein resides in the secreted. Its function is as follows. Seems to possess an anti-inflammatory activity as it can reverse the barrier-decreasing effects of TNF alpha. Might therefore contribute to the lack of inflammatory reaction seen during infection in spite the of extensive necrosis and massive virus production. Does not seem to be involved in activation of primary macrophages. Does not seem to interact specifically with neutrophils. Functionally, viroporin that permeabilizes mammalian cell plasma membranes. It acts by altering permeation of ionic compounds and small molecules. This activity may lead to viral enterotoxic activity. The polypeptide is Pre-small/secreted glycoprotein (GP) (Reston ebolavirus (strain Siena/Philippine-92) (REBOV)).